Reading from the N-terminus, the 279-residue chain is Digeranylgeranylglyceryl phosphate synthase (279 aa).

8 helical membrane passes run 14-34 (VKNCLTASFGTIIGGLIASNF), 36-56 (FGLIGYILLASLIVFLVCGFG), 94-114 (LMISGIIISLFNMICFAIALI), 131-153 (IIGNLIVAYLTGSIFIFGGASVG), 157-175 (ITLILFLCALFATWSREII), 201-221 (IFVAIGFLLCSILLSPLPYIL), 224-244 (FGAPYLMAIMICNVLFILAVL), and 259-279 (SKYIKIIMNLVLLSFVIGSLM).

This sequence belongs to the UbiA prenyltransferase family. DGGGP synthase subfamily. Mg(2+) serves as cofactor.

Its subcellular location is the cell membrane. The catalysed reaction is sn-3-O-(geranylgeranyl)glycerol 1-phosphate + (2E,6E,10E)-geranylgeranyl diphosphate = 2,3-bis-O-(geranylgeranyl)-sn-glycerol 1-phosphate + diphosphate. The protein operates within membrane lipid metabolism; glycerophospholipid metabolism. Functionally, prenyltransferase that catalyzes the transfer of the geranylgeranyl moiety of geranylgeranyl diphosphate (GGPP) to the C2 hydroxyl of (S)-3-O-geranylgeranylglyceryl phosphate (GGGP). This reaction is the second ether-bond-formation step in the biosynthesis of archaeal membrane lipids. The sequence is that of Digeranylgeranylglyceryl phosphate synthase from Methanococcus aeolicus (strain ATCC BAA-1280 / DSM 17508 / OCM 812 / Nankai-3).